The primary structure comprises 229 residues: 5'-methylthioadenosine/S-adenosylhomocysteine nucleosidase (229 aa).

Glu12 acts as the Proton acceptor in catalysis. Substrate contacts are provided by residues Gly78, Ile152, and 173-174 (ME). Asp197 serves as the catalytic Proton donor.

The protein belongs to the PNP/UDP phosphorylase family. MtnN subfamily.

The catalysed reaction is S-adenosyl-L-homocysteine + H2O = S-(5-deoxy-D-ribos-5-yl)-L-homocysteine + adenine. It carries out the reaction S-methyl-5'-thioadenosine + H2O = 5-(methylsulfanyl)-D-ribose + adenine. It catalyses the reaction 5'-deoxyadenosine + H2O = 5-deoxy-D-ribose + adenine. The protein operates within amino-acid biosynthesis; L-methionine biosynthesis via salvage pathway; S-methyl-5-thio-alpha-D-ribose 1-phosphate from S-methyl-5'-thioadenosine (hydrolase route): step 1/2. Catalyzes the irreversible cleavage of the glycosidic bond in both 5'-methylthioadenosine (MTA) and S-adenosylhomocysteine (SAH/AdoHcy) to adenine and the corresponding thioribose, 5'-methylthioribose and S-ribosylhomocysteine, respectively. Also cleaves 5'-deoxyadenosine, a toxic by-product of radical S-adenosylmethionine (SAM) enzymes, into 5-deoxyribose and adenine. The sequence is that of 5'-methylthioadenosine/S-adenosylhomocysteine nucleosidase from Haemophilus influenzae (strain PittGG).